Here is a 337-residue protein sequence, read N- to C-terminus: Heme A synthase (337 aa).

The next 7 membrane-spanning stretches (helical) occupy residues 3 to 23 (LARW…IGGI), 94 to 114 (VIGL…MIPA), 120 to 140 (LLAL…MVAS), 154 to 174 (LSAH…TALD), 191 to 211 (GVAW…AWVA), 248 to 268 (FLLH…LVVL), and 289 to 309 (TMVV…IAVA). H254 is a binding site for heme. H310 provides a ligand contact to heme. Residues 311–331 (QLTGALLVISTAWAAHAIGTA) traverse the membrane as a helical segment.

Belongs to the COX15/CtaA family. Type 2 subfamily. Interacts with CtaB. Requires heme b as cofactor.

The protein localises to the cell membrane. The enzyme catalyses Fe(II)-heme o + 2 A + H2O = Fe(II)-heme a + 2 AH2. The protein operates within porphyrin-containing compound metabolism; heme A biosynthesis; heme A from heme O: step 1/1. Its function is as follows. Catalyzes the conversion of heme O to heme A by two successive hydroxylations of the methyl group at C8. The first hydroxylation forms heme I, the second hydroxylation results in an unstable dihydroxymethyl group, which spontaneously dehydrates, resulting in the formyl group of heme A. In Erythrobacter litoralis (strain HTCC2594), this protein is Heme A synthase.